The primary structure comprises 637 residues: 1-deoxy-D-xylulose-5-phosphate synthase (637 aa).

Residues His-71 and 112 to 114 (SHA) contribute to the thiamine diphosphate site. Position 144 (Asp-144) interacts with Mg(2+). Residues 145 to 146 (GA), Asn-173, Tyr-284, and Glu-365 each bind thiamine diphosphate. Position 173 (Asn-173) interacts with Mg(2+).

It belongs to the transketolase family. DXPS subfamily. In terms of assembly, homodimer. It depends on Mg(2+) as a cofactor. Thiamine diphosphate is required as a cofactor.

It carries out the reaction D-glyceraldehyde 3-phosphate + pyruvate + H(+) = 1-deoxy-D-xylulose 5-phosphate + CO2. The protein operates within metabolic intermediate biosynthesis; 1-deoxy-D-xylulose 5-phosphate biosynthesis; 1-deoxy-D-xylulose 5-phosphate from D-glyceraldehyde 3-phosphate and pyruvate: step 1/1. Catalyzes the acyloin condensation reaction between C atoms 2 and 3 of pyruvate and glyceraldehyde 3-phosphate to yield 1-deoxy-D-xylulose-5-phosphate (DXP). This Mycobacterium ulcerans (strain Agy99) protein is 1-deoxy-D-xylulose-5-phosphate synthase.